Consider the following 254-residue polypeptide: Type III pantothenate kinase 2 (254 aa).

ATP is bound at residue 6 to 13 (DMGNSHIH). 107-110 (GADR) lines the substrate pocket. The active-site Proton acceptor is aspartate 109. Aspartate 130 contacts K(+). Threonine 133 is an ATP binding site. A substrate-binding site is contributed by threonine 185.

It belongs to the type III pantothenate kinase family. Homodimer. Requires NH4(+) as cofactor. K(+) is required as a cofactor.

The protein localises to the cytoplasm. The enzyme catalyses (R)-pantothenate + ATP = (R)-4'-phosphopantothenate + ADP + H(+). The protein operates within cofactor biosynthesis; coenzyme A biosynthesis; CoA from (R)-pantothenate: step 1/5. Its function is as follows. Catalyzes the phosphorylation of pantothenate (Pan), the first step in CoA biosynthesis. In Francisella tularensis subsp. holarctica (strain LVS), this protein is Type III pantothenate kinase 2.